The following is a 236-amino-acid chain: Rab-like protein 3 (236 aa).

The segment at 1-236 is small GTPase-like; the sequence is MASLDRVKVL…GGTLKSLHYD (236 aa). GTP is bound by residues 16-21, 148-150, and 179-180; these read GVGKSS, KLD, and DC.

This sequence belongs to the small GTPase superfamily. Rab family. In terms of assembly, homodimer. Interacts with GPR89; the interaction stabilizes GPR89. Interacts with RAP1GDS1.

Required for KRAS signaling regulation and modulation of cell proliferation. Regulator of KRAS prenylation, and probably prenylation of other small GTPases. Required for lymphocyte development and function. Not required for myeloid cell development. This is Rab-like protein 3 (RABL3) from Bos taurus (Bovine).